The following is a 98-amino-acid chain: Dehydrogenase acuH (98 aa).

It participates in secondary metabolite biosynthesis. Dehydrogenase; part of the gene cluster that mediates the biosynthesis of aculins. The pathway begins with the synthesis of 6-methylsalicylic acid by the polyketide synthase (PKS) acuA via condensation of acetate and malonate units. The 6-methylsalicylic acid decarboxylase acuB then catalyzes the decarboxylation of 6-methylsalicylic acid to yield m-cresol (also known as 3-methylphenol). These first reactions occur in the cytosol. The intermediate m-cresol is then transported into the endoplasmic reticulum where the cytochrome P450 monooxygenase acuC converts it to m-hydroxybenzyl alcohol, which is further converted to gentisyl alcohol by the cytochrome P450 monooxygenase acuD. Gentisyl alcohol is further oxidized by the oxidoreductase acuE that probably catalyzes hydroxylation of the aromatic ring. The aromatic system might then be opened by oxidation through a Baeyer-Villiger type of oxidation, which could be catalyzed by acuF, with the carboxylic acid at C-1 subsequently reduced to an aldehyde by acuG. Subsequently, a hemiacetal is formed, before the dehydrogenase acuH would reduce the double bond between C-4 and C-6. Finally, keto-enol tautomerism results in formation of aculinic acid, which exists as two diastereomers (both R/S configurations at C-1) by non-enzymatic hemiacetal formation. The carboxypeptidase acuI could be involved in the linking of aculinic acid to an aculene A moiety produced by the aculene biosynthesis cluster and which leads to the production of aculin A. AcuI may also be involved in the attachment of proline to aculinic acid to form epi-aculins A and B. The sequence is that of Dehydrogenase acuH from Aspergillus aculeatus (strain ATCC 16872 / CBS 172.66 / WB 5094).